The following is an 88-amino-acid chain: Acyl-CoA-binding domain-containing protein 7 (88 aa).

One can recognise an ACB domain in the interval 3 to 88 (LQADFDQAAQ…ARELIEKYGI (86 aa)). Residues Arg15, 30–34 (YGLYK), Lys56, and Tyr75 each bind an acyl-CoA.

Belongs to the ACBD7 family.

Binds medium- and long-chain acyl-CoA esters. This is Acyl-CoA-binding domain-containing protein 7 (Acbd7) from Mus musculus (Mouse).